A 264-amino-acid chain; its full sequence is Small ribosomal subunit protein eS1 (264 aa).

This sequence belongs to the eukaryotic ribosomal protein eS1 family. As to quaternary structure, component of the small ribosomal subunit. Mature ribosomes consist of a small (40S) and a large (60S) subunit. The 40S subunit contains about 33 different proteins and 1 molecule of RNA (18S). The 60S subunit contains about 49 different proteins and 3 molecules of RNA (25S, 5.8S and 5S).

The protein localises to the cytoplasm. The chain is Small ribosomal subunit protein eS1 from Babesia bovis.